Consider the following 456-residue polypeptide: Bifunctional protein GlmU (456 aa).

The interval 1-229 (MLNSAMSVVI…ISETDGVNNR (229 aa)) is pyrophosphorylase. UDP-N-acetyl-alpha-D-glucosamine is bound by residues 11 to 14 (LAAG), lysine 25, glutamine 76, 81 to 82 (GT), 103 to 105 (YGD), glycine 140, glutamate 154, asparagine 169, and asparagine 227. A Mg(2+)-binding site is contributed by aspartate 105. A Mg(2+)-binding site is contributed by asparagine 227. Positions 230–250 (LQLSRLERIYQAEQAEKLLLS) are linker. Residues 251 to 456 (GVMLRDPARF…QGWQRPVKKK (206 aa)) are N-acetyltransferase. The UDP-N-acetyl-alpha-D-glucosamine site is built by arginine 333 and lysine 351. Histidine 363 functions as the Proton acceptor in the catalytic mechanism. UDP-N-acetyl-alpha-D-glucosamine contacts are provided by tyrosine 366 and asparagine 377. Acetyl-CoA is bound by residues alanine 380, 386 to 387 (NY), serine 405, alanine 423, and arginine 440.

This sequence in the N-terminal section; belongs to the N-acetylglucosamine-1-phosphate uridyltransferase family. The protein in the C-terminal section; belongs to the transferase hexapeptide repeat family. Homotrimer. Mg(2+) serves as cofactor.

It localises to the cytoplasm. It catalyses the reaction alpha-D-glucosamine 1-phosphate + acetyl-CoA = N-acetyl-alpha-D-glucosamine 1-phosphate + CoA + H(+). The enzyme catalyses N-acetyl-alpha-D-glucosamine 1-phosphate + UTP + H(+) = UDP-N-acetyl-alpha-D-glucosamine + diphosphate. The protein operates within nucleotide-sugar biosynthesis; UDP-N-acetyl-alpha-D-glucosamine biosynthesis; N-acetyl-alpha-D-glucosamine 1-phosphate from alpha-D-glucosamine 6-phosphate (route II): step 2/2. It participates in nucleotide-sugar biosynthesis; UDP-N-acetyl-alpha-D-glucosamine biosynthesis; UDP-N-acetyl-alpha-D-glucosamine from N-acetyl-alpha-D-glucosamine 1-phosphate: step 1/1. It functions in the pathway bacterial outer membrane biogenesis; LPS lipid A biosynthesis. In terms of biological role, catalyzes the last two sequential reactions in the de novo biosynthetic pathway for UDP-N-acetylglucosamine (UDP-GlcNAc). The C-terminal domain catalyzes the transfer of acetyl group from acetyl coenzyme A to glucosamine-1-phosphate (GlcN-1-P) to produce N-acetylglucosamine-1-phosphate (GlcNAc-1-P), which is converted into UDP-GlcNAc by the transfer of uridine 5-monophosphate (from uridine 5-triphosphate), a reaction catalyzed by the N-terminal domain. The polypeptide is Bifunctional protein GlmU (Salmonella heidelberg (strain SL476)).